Consider the following 861-residue polypeptide: Leucine--tRNA ligase (861 aa).

The 'HIGH' region motif lies at 42 to 52 (PYPSGRLHMGH). Residues 619–623 (KMSKS) carry the 'KMSKS' region motif. Lysine 622 is an ATP binding site.

Belongs to the class-I aminoacyl-tRNA synthetase family.

Its subcellular location is the cytoplasm. The catalysed reaction is tRNA(Leu) + L-leucine + ATP = L-leucyl-tRNA(Leu) + AMP + diphosphate. The polypeptide is Leucine--tRNA ligase (Haemophilus influenzae (strain ATCC 51907 / DSM 11121 / KW20 / Rd)).